The sequence spans 1028 residues: Contactin-3 (1028 aa).

Residues 1–19 (MMLSWKQLILLSFIGCLAG) form the signal peptide. 6 consecutive Ig-like C2-type domains span residues 32-117 (PSNS…AKLQ), 122-209 (ENFK…RVLG), 227-313 (PKIE…GRLT), 318-402 (PYWL…AELK), 408-497 (PDFS…LVVT), and 499-593 (PTRI…AELI). Cystine bridges form between C50/C100, C144/C196, C249/C297, C339/C386, and C431/C479. N65 and N193 each carry an N-linked (GlcNAc...) asparagine glycan. N-linked (GlcNAc...) asparagine glycans are attached at residues N377, N468, and N489. An intrachain disulfide couples C521 to C577. Fibronectin type-III domains follow at residues 600 to 698 (PPEN…TEEA), 703 to 800 (APSE…SAEE), 805 to 901 (APSH…TKKT), and 902 to 998 (PPSQ…TSMD). Residues 684–714 (GEPSLPSEKVRTEEAAPEIAPSEVSGGGGSR) form a disordered region. N-linked (GlcNAc...) asparagine glycosylation is found at N765, N860, N895, N913, N931, and N956. The GPI-anchor amidated serine moiety is linked to residue S1002. Positions 1003-1028 (TSAISNIHPLSGYMSVLLFFIVNALW) are cleaved as a propeptide — removed in mature form.

It belongs to the immunoglobulin superfamily. Contactin family. As to quaternary structure, interacts with PTPRG. As to expression, specifically expressed in brain. Ectopically expressed in tumors expressing endogenous intracisternal A-type particles (IAPs).

The protein localises to the cell membrane. Functionally, contactins mediate cell surface interactions during nervous system development. Has some neurite outgrowth-promoting activity. This Mus musculus (Mouse) protein is Contactin-3 (Cntn3).